The following is a 551-amino-acid chain: Colicin E3 (551 aa).

Disordered regions lie at residues 1–74 (MSGG…SGGG), 243–269 (TLSP…NTRD), and 293–320 (PDQV…EAAE). The translocation (T) domain stretch occupies residues 1-315 (MSGGDGRGHN…RQQEWDATHP (315 aa)). Residues 20-35 (INGGPTGLGVGGGASD) show a composition bias toward gly residues. The Binds to TolB signature appears at 35 to 39 (DGSGW). Residues 36-45 (GSGWSSENNP) show a composition bias toward low complexity. The segment covering 46-74 (WGGGSGSGIHWGGGSGHGNGGGNGNSGGG) has biased composition (gly residues). Positions 296 to 320 (VKQRQDEENRRQQEWDATHPVEAAE) are enriched in basic and acidic residues. A coiled-coil region spans residues 316 to 378 (VEAAERNYER…IAEIKQFNRF (63 aa)). The tract at residues 316–450 (VEAAERNYER…SAENNLNDEK (135 aa)) is receptor-binding (R) domain. The short motif at 379-385 (AHDPMAG) is the Hairpin element. Residues 386-450 (GHRMWQMAGL…SAENNLNDEK (65 aa)) are a coiled coil. Residues 406–505 (NKQAAFDAAA…KRWTGDKGRK (100 aa)) are disordered. Residues 430 to 472 (ESRKKKEDKKRSAENNLNDEKNKPRKGFKDYGHDYHPAPKTEN) show a composition bias toward basic and acidic residues. The linker stretch occupies residues 451–456 (NKPRKG). The tract at residues 455–551 (KGFKDYGHDY…DPKRNIKKYL (97 aa)) is ribosome inactivating activity. Positions 457 to 551 (FKDYGHDYHP…DPKRNIKKYL (95 aa)) are cytotoxic RNase (C) domain. The Proton donor role is filled by H513. Residue E517 is the Proton acceptor of the active site. The segment at 517–551 (EGYRASDGQHLGSFDPKTGNQLKGPDPKRNIKKYL) is disordered. The segment at 530–551 (FDPKTGNQLKGPDPKRNIKKYL) is binding of immunity protein. R545 is an active-site residue.

This sequence belongs to the cloacin colicin family. In terms of assembly, native colicin E3 is a 1:1 complex of A chain and protein B (cognate immunity protein, Im3); protein A is 1,000-fold more active in inactivating ribosomes than the native complex. The cytotoxic fragment (residues 456-551, C95) forms a 1:1 complex with Im3. The receptor-binding (R) domain binds obliquely to its receptor BtuB without displacing BtuB's central plug; binding unfolds the R domain. The N-terminal 83 residues (T83) bind OmpF; trimeric complexes with colicin E3, BtuB and OmpF can be cross-linked and immunoprecipitated. Probably inserts into the OmpF pore as an unfolded peptide and spans the OmpF pore. In a complex with T.thermophilus 70S ribosomes, cytotoxic fragment C96 contacts 16S rRNA, 23S rRNA, mRNA, P-site tRNA and ribosomal protein uS12.

The protein localises to the secreted. Its function is as follows. Colicins are polypeptide toxins produced by and active against E.coli and closely related bacteria. Cleaves 16S rRNA between adenosine-1492 and guanosine-1493 (E.coli 16S rRNA numbering), releasing a 49 nucleotide (nt) 'colicin' fragment. Inactivates 70S ribosomes or 30S subunits by endonucleolytically cleaving 16S RNA at a specific site about 50 nt from its C-terminus. Produces 5'-OH-guanosine and a 2',3'-cyclic phosphate adenosine. Mixing a susceptible (e.g. strain K12 / A19) and colicin E3 producing strain results in total protein translation inhibition within 11 minutes. Its activity is inhibited by cognate immunity protein Im3. Uses BtuB, the vitamin B transporter, as a receptor on the outer membrane; binds via the receptor (R) domain. Then the translocation domain (T) probably 'fishes' for its outer membrane translocon protein, OmpF. The N-terminal 83 residues (T83) can bind to and occlude OmpF channels. A complex of the cytotoxic C-terminal 96 residues (C96) plus the immunity protein does not occlude OmpF; upon complex separation from the immunity protein C96 becomes disordered and is able to bind OmpF. The N-terminus probably binds TolB and then reinserts into an empty pore of trimeric OmpF; the rest of the protein is pulled through OmpF and crosses the inner membrane, where the cytotoxic fragment is probably released by protease FtsH. The sequence is that of Colicin E3 (ceaC) from Escherichia coli.